Reading from the N-terminus, the 318-residue chain is NADH-ubiquinone oxidoreductase chain 1 (318 aa).

Helical transmembrane passes span 2–22 (FLVN…FLTL), 70–90 (MFIM…TPLP), 100–120 (LGVL…LWSG), 140–160 (ISYE…SGSF), 172–192 (LWLI…TLAE), 217–237 (GGSF…MNAI), 253–273 (EFYT…FLWI), and 294–314 (LPLT…TASI).

The protein belongs to the complex I subunit 1 family. Core subunit of respiratory chain NADH dehydrogenase (Complex I) which is composed of 45 different subunits.

It localises to the mitochondrion inner membrane. It carries out the reaction a ubiquinone + NADH + 5 H(+)(in) = a ubiquinol + NAD(+) + 4 H(+)(out). Its function is as follows. Core subunit of the mitochondrial membrane respiratory chain NADH dehydrogenase (Complex I) which catalyzes electron transfer from NADH through the respiratory chain, using ubiquinone as an electron acceptor. Essential for the catalytic activity and assembly of complex I. This is NADH-ubiquinone oxidoreductase chain 1 (MT-ND1) from Emballonura alecto (Philippine sheath-tailed bat).